The sequence spans 569 residues: Sulfite reductase [NADPH] hemoprotein beta-component (569 aa).

4 residues coordinate [4Fe-4S] cluster: C433, C439, C478, and C482. Position 482 (C482) interacts with siroheme.

This sequence belongs to the nitrite and sulfite reductase 4Fe-4S domain family. As to quaternary structure, alpha(8)-beta(8). The alpha component is a flavoprotein, the beta component is a hemoprotein. The cofactor is siroheme. [4Fe-4S] cluster is required as a cofactor.

The enzyme catalyses hydrogen sulfide + 3 NADP(+) + 3 H2O = sulfite + 3 NADPH + 4 H(+). It functions in the pathway sulfur metabolism; hydrogen sulfide biosynthesis; hydrogen sulfide from sulfite (NADPH route): step 1/1. Its function is as follows. Component of the sulfite reductase complex that catalyzes the 6-electron reduction of sulfite to sulfide. This is one of several activities required for the biosynthesis of L-cysteine from sulfate. The chain is Sulfite reductase [NADPH] hemoprotein beta-component from Pseudoalteromonas atlantica (strain T6c / ATCC BAA-1087).